The chain runs to 355 residues: MAIDDNKQKALAAALGQIEKQFGKGSIMRLGEDRTMDVETISTGSLSLDIALGAGGLPMGRIVEIYGPESSGKTTLTLQVIAAAQRKGKTCAFIDAEHALDPVYAKKLGVDIDNLLCSQPDTGEQALEICDALARSGAVDVIIVDSVAALTPKAEIEGEIGDSHMGLAARMMSQAMRKLAGNLKNSGTLLIFINQIRMKIGVMFGNPETTTGGNALKFYASVRLDIRRIGAIKEGDEVVGSETRVKVVKNKVAAPFKQAEFQIMYGEGINIFGELVDLGVKHKLIEKAGAWYSYNGDKIGQGKANAGNFLKENSAIANEIDAKLREMLLGNQDDKPDFTPAAHEVDEGSEAKENF.

Residue 67-74 (GPESSGKT) coordinates ATP. The interval 331 to 355 (NQDDKPDFTPAAHEVDEGSEAKENF) is disordered.

Belongs to the RecA family.

It localises to the cytoplasm. Can catalyze the hydrolysis of ATP in the presence of single-stranded DNA, the ATP-dependent uptake of single-stranded DNA by duplex DNA, and the ATP-dependent hybridization of homologous single-stranded DNAs. It interacts with LexA causing its activation and leading to its autocatalytic cleavage. The sequence is that of Protein RecA from Erwinia tasmaniensis (strain DSM 17950 / CFBP 7177 / CIP 109463 / NCPPB 4357 / Et1/99).